The primary structure comprises 257 residues: MMRYALGVEYDGSEFLGWQQLGEMGPSVQATLQQALASVADSSVRVVCAGRTDAGVHGQCQVVHFDSAVTRPPRAWILGTTTRLPSSVAVRWCVPTSEDFHARFSACARRYRYRLLNRQVRPALQHQFLSWERHPLDAQAMHVAAQMLLGENDFSAFRSAQCQALHARRELQAISVRRDAEVIEICVQANAFLHHMVRNIVGSLLMVGTGERPMEWIAELLAGRDRTMAGPTASARGLVFVGPLYPEKWHLPMEVSV.

Asp-53 acts as the Nucleophile in catalysis. Position 111 (Tyr-111) interacts with substrate.

The protein belongs to the tRNA pseudouridine synthase TruA family. Homodimer.

The enzyme catalyses uridine(38/39/40) in tRNA = pseudouridine(38/39/40) in tRNA. Formation of pseudouridine at positions 38, 39 and 40 in the anticodon stem and loop of transfer RNAs. In Xylella fastidiosa (strain M23), this protein is tRNA pseudouridine synthase A.